Here is a 72-residue protein sequence, read N- to C-terminus: Enterobactin biosynthesis protein YbdZ (72 aa).

This sequence belongs to the MbtH-like family.

Functionally, involved in the biosynthesis of the siderophore enterobactin (enterochelin), which is a macrocyclic trimeric lactone of N-(2,3-dihydroxybenzoyl)-serine. Plays a role in the catalytic function of EntF. It is required for adenylation of amino acids in non-ribosomal peptide biosynthesis. This is Enterobactin biosynthesis protein YbdZ from Escherichia coli (strain K12).